Here is a 147-residue protein sequence, read N- to C-terminus: Small ribosomal subunit protein uS9 (147 aa).

This sequence belongs to the universal ribosomal protein uS9 family.

The chain is Small ribosomal subunit protein uS9 (rps16) from Dictyostelium discoideum (Social amoeba).